An 826-amino-acid chain; its full sequence is Lethal(3)malignant brain tumor-like protein 1 (826 aa).

Phosphoserine is present on Ser-136. Disordered stretches follow at residues 167-197 and 220-271; these read LEPP…SGDR and LLKP…RSQL. Residues 242–256 are compositionally biased toward basic and acidic residues; it reads EAVKQGEGKDAEREP. MBT repeat units lie at residues 280–380, 388–487, and 496–591; these read WSWE…LQLP, FSWS…LTPP, and FCWE…LEPP. Residues 453-460 are interaction with monomethylated and dimethylated peptides; that stretch reads FDDWGDTY. Residues 586 to 621 are disordered; sequence HPLEPPLRPRESSSVSPGGCPPLSHRSPPHTKTSKY. A compositionally biased stretch (basic residues) spans 612-621; that stretch reads SPPHTKTSKY. The CCHHC-type zinc finger occupies 619-662; it reads SKYNFHHRKCPTPGCDGSGHVTGKFTAHHCLSGCPLAEKNQSRL. The Zn(2+) site is built by Cys-628, Cys-633, His-646, and Cys-652. Residues 663 to 699 form a disordered region; the sequence is KAELSDSETAARKKNPSNLSPRKKPRHQGRIGRPPKY. The span at 683-699 shows a compositional bias: basic residues; it reads PRKKPRHQGRIGRPPKY. The region spanning 757–821 is the SAM domain; the sequence is WTIEEVFGFV…YNAILMFKNT (65 aa).

Homodimer. Interacts with RB1/RB (when monomethylated at 'Lys-860'). Interacts with p53/TP53 (when monomethylated at 'Lys-382'). Interacts with CBX3, ETV6, KMT5A and VCP/p97. In terms of processing, ubiquitinated in a VCP/p97-dependent way following DNA damage, leading to its removal from DNA damage sites, promoting accessibility of H4K20me2 mark for DNA repair protein TP53BP1, which is then recruited to DNA damage sites. As to expression, highly expressed in brain, testis, eyes, and ES cells.

It is found in the nucleus. Polycomb group (PcG) protein that specifically recognizes and binds mono- and dimethyllysine residues on target proteins, thereby acting as a 'reader' of a network of post-translational modifications. PcG proteins maintain the transcriptionally repressive state of genes: acts as a chromatin compaction factor by recognizing and binding mono- and dimethylated histone H1b/H1-4 at 'Lys-26' (H1bK26me1 and H1bK26me2) and histone H4 at 'Lys-20' (H4K20me1 and H4K20me2), leading to condense chromatin and repress transcription. Recognizes and binds p53/TP53 monomethylated at 'Lys-382', leading to repress p53/TP53-target genes. Also recognizes and binds RB1/RB monomethylated at 'Lys-860'. Participates in the ETV6-mediated repression. Probably plays a role in cell proliferation. Overexpression induces multinucleated cells, suggesting that it is required to accomplish normal mitosis. In Mus musculus (Mouse), this protein is Lethal(3)malignant brain tumor-like protein 1 (L3mbtl1).